The sequence spans 186 residues: Large ribosomal subunit protein uL5 (186 aa).

Belongs to the universal ribosomal protein uL5 family. Part of the 50S ribosomal subunit; part of the 5S rRNA/L5/L18/L25 subcomplex. Contacts the 5S rRNA and the P site tRNA. Forms a bridge to the 30S subunit in the 70S ribosome.

Functionally, this is one of the proteins that bind and probably mediate the attachment of the 5S RNA into the large ribosomal subunit, where it forms part of the central protuberance. In the 70S ribosome it contacts protein S13 of the 30S subunit (bridge B1b), connecting the 2 subunits; this bridge is implicated in subunit movement. Contacts the P site tRNA; the 5S rRNA and some of its associated proteins might help stabilize positioning of ribosome-bound tRNAs. The polypeptide is Large ribosomal subunit protein uL5 (Karelsulcia muelleri (strain GWSS) (Sulcia muelleri)).